The primary structure comprises 100 residues: Co-chaperonin GroES (100 aa).

The protein belongs to the GroES chaperonin family. Heptamer of 7 subunits arranged in a ring. Interacts with the chaperonin GroEL.

It localises to the cytoplasm. In terms of biological role, together with the chaperonin GroEL, plays an essential role in assisting protein folding. The GroEL-GroES system forms a nano-cage that allows encapsulation of the non-native substrate proteins and provides a physical environment optimized to promote and accelerate protein folding. GroES binds to the apical surface of the GroEL ring, thereby capping the opening of the GroEL channel. This Mycolicibacterium paratuberculosis (strain ATCC BAA-968 / K-10) (Mycobacterium paratuberculosis) protein is Co-chaperonin GroES.